Reading from the N-terminus, the 381-residue chain is Protein palisade (381 aa).

The first 25 residues, 1 to 25, serve as a signal peptide directing secretion; the sequence is MMMHSRNRSWTLTLLALGVVLATSA. Repeat copies occupy residues 190–199, 200–209, 210–219, 220–229, 230–239, and 247–256. The segment at 190 to 256 is 6 X 10 AA approximate tandem repeats of P-[AP]-A-P-A-Y-E-[AP]-P-[AT]; sequence PAAPAYEAPA…PPAPAYEPPA (67 aa). 2 disordered regions span residues 236–270 and 309–329; these read EAPT…AQPS and TPTA…PSQN. Residues 311–321 show a composition bias toward pro residues; the sequence is TAPPPPPPPAP.

In terms of processing, sulfated by pip; may be involved in embryo dorsal-ventral axis determination. Sulfation by pip may occur on covalently bound glycosaminoglycans. May undergo both disulfide and non-disulfide cross-linking upon incorporation into the vitelline membrane. As to expression, present in the perivitelline space of stage 10 egg chambers and in the vitelline membrane adjacent to the oocyte in stage 13 and 14 egg chambers (at protein level).

Its subcellular location is the secreted. The protein resides in the extracellular space. It localises to the extracellular matrix. Its function is as follows. Minor protein component of the vitelline membrane. Involved in vitelline membrane biogenesis during late stages of oogenesis. Required for efficient disulfide and non-disulfide cross-linking of several vitelline membrane components. This is Protein palisade from Drosophila melanogaster (Fruit fly).